An 870-amino-acid polypeptide reads, in one-letter code: MATACKRSPGESQSEDIEASRMKRAAAKHLIERYYHQLTEGCGNEACTNEFCASCPTFLRMDNNAAAIKALELYKINAKLCDPHPSKKGASSAYLENSKGASNNSEIKMNKKEGKDFKDVIYLTEEKVYEIYEFCRESEDYSPLIRVIGRIFSSAEALVLSFRKVKQHTKEELKSLQEKDEDKDEDEKEKAACSAAAMEEDSEASSSRMGDSSQGDNNVQKLGPDDVTVDIDAIRRVYSSLLANEKLETAFLNALVYLSPNVECDLTYHNVYTRDPNYLNLFIIVMENSNLHSPEYLEMALPLFCKAMCKLPLEAQGKLIRLWSKYSADQIRRMMETFQQLITYKVISNEFNSRNLVNDDDAIVAASKCLKMVYYANVVGGDVDTNHNEEDDEEPIPESSELTLQELLGDERRNKKGPRVDPLETELGVKTLDCRKPLISFEEFINEPLNDVLEMDKDYTFFKVETENKFSFMTCPFILNAVTKNLGLYYDNRIRMYSERRITVLYSLVQGQQLNPYLRLKVRRDHIIDDALVRLEMIAMENPADLKKQLYVEFEGEQGVDEGGVSKEFFQLVVEEIFNPDIGMFTYDEATKLFWFNPSSFETEGQFTLIGIVLGLAIYNNCILDVHFPMVVYRKLMGKKGTFRDLGDSHPVLYQSLKDLLEYEGSVEDDMMITFQISQTDLFGNPMMYDLKENGDKIPITNENRKEFVNLYSDYILNKSVEKQFKAFRRGFHMVTNESPLKYLFRPEEIELLICGSRNLDFQALEETTEYDGGYTRESVVIREFWEIVHSFTDEQKRLFLQFTTGTDRAPVGGLGKLKMIIAKNGPDTERLPTSHTCFNVLLLPEYSSKEKLKERLLKAITYAKGFGML.

Ser-8 bears the Phosphoserine mark. The segment at 42–81 adopts a C4-type; atypical zinc-finger fold; that stretch reads CGNEACTNEFCASCPTFLRMDNNAAAIKALELYKINAKLC. Basic and acidic residues predominate over residues 171–180; the sequence is EELKSLQEKD. A disordered region spans residues 171–223; the sequence is EELKSLQEKDEDKDEDEKEKAACSAAAMEEDSEASSSRMGDSSQGDNNVQKLG. Polar residues predominate over residues 208-220; it reads RMGDSSQGDNNVQ. Phosphoserine is present on Ser-213. One can recognise an HECT domain in the interval 542 to 870; sequence NPADLKKQLY…ITYAKGFGML (329 aa). Tyr-654 bears the Phosphotyrosine; by ABL1 mark. Residue Cys-838 is the Glycyl thioester intermediate of the active site.

As to quaternary structure, the active form is probably a homotrimer. Binds UBQLN1 and UBQLN2. Interacts with the 26S proteasome. Interacts with BPY2. Interacts with HIF1AN, MAPK6 and NEURL4; interaction with MAPK6 may be mediated by NEURL4. Interacts with the proteasomal subunit PSMD4. Interacts with BMAL1. Interacts with ARC. Interacts with ESR1 and WBP2. Phosphorylation at Tyr-654 by ABL1 impairs E3 ligase activity. Widely expressed. Most abundant in brain, heart and thymus.

It is found in the cytoplasm. The protein localises to the nucleus. The catalysed reaction is S-ubiquitinyl-[E2 ubiquitin-conjugating enzyme]-L-cysteine + [acceptor protein]-L-lysine = [E2 ubiquitin-conjugating enzyme]-L-cysteine + N(6)-ubiquitinyl-[acceptor protein]-L-lysine.. It functions in the pathway protein modification; protein ubiquitination. Its function is as follows. E3 ubiquitin-protein ligase which accepts ubiquitin from an E2 ubiquitin-conjugating enzyme in the form of a thioester and transfers it to its substrates. Several substrates have been identified including the BMAL1, ARC, LAMTOR1, RAD23A and RAD23B, MCM7 (which is involved in DNA replication), annexin A1, the PML tumor suppressor, and the cell cycle regulator CDKN1B. Additionally, may function as a cellular quality control ubiquitin ligase by helping the degradation of the cytoplasmic misfolded proteins. Finally, UBE3A also promotes its own degradation in vivo. Plays an important role in the regulation of the circadian clock: involved in the ubiquitination of the core clock component BMAL1, leading to its proteasomal degradation. Acts as a regulator of synaptic development by mediating ubiquitination and degradation of ARC. Required for synaptic remodeling in neurons by mediating ubiquitination and degradation of LAMTOR1, thereby limiting mTORC1 signaling and activity-dependent synaptic remodeling. Synergizes with WBP2 in enhancing PGR activity. The sequence is that of Ubiquitin-protein ligase E3A from Mus musculus (Mouse).